The following is a 173-amino-acid chain: MDIAIQHPWFRRALGYPSRLFDQFFGEGLFDYDLFPYATSTVSPYYRYSLFRNFLDSSNSGMSEVRSDRDKFMVYLDVKHFSPEELNVKVAEDYVEIQGKHGERQDDHGYISREFHRRYRLPSNVDQSAITCTLSADGQLTICGPKSGGSESGRGDRSIPVTRDDKTNSTPSS.

N-acetylmethionine is present on M1. The sHSP domain maps to 53–164 (NFLDSSNSGM…GDRSIPVTRD (112 aa)). 3 residues coordinate Zn(2+): H101, E103, and H108. C132 and C143 are oxidised to a cystine. The tract at residues 143–173 (CGPKSGGSESGRGDRSIPVTRDDKTNSTPSS) is disordered. Over residues 153-167 (GRGDRSIPVTRDDKT) the composition is skewed to basic and acidic residues.

Belongs to the small heat shock protein (HSP20) family. Heteropolymer composed of three CRYAA and one CRYAB subunits. Inter-subunit bridging via zinc ions enhances stability, which is crucial as there is no protein turn over in the lens. Zinc coordination is achieved at least by His-101, Glu-103 and His-108. His-101 and Glu-103 come from the same molecule within the oligomer, while His-108 residue is provided by another molecule. Can also form homodimers and homotetramers (dimers of dimers) which serve as the building blocks of homooligomers. Part of a complex required for lens intermediate filament formation composed of BFSP1, BFSP2 and CRYAA.

It is found in the cytoplasm. It localises to the nucleus. Its function is as follows. Contributes to the transparency and refractive index of the lens. May act as a chaperone, preventing aggregation of various proteins under a wide range of stress conditions. In Psalidodon fasciatus (Banded astyanax), this protein is Alpha-crystallin A chain (cryaa).